Here is a 165-residue protein sequence, read N- to C-terminus: Nucleotide-binding protein P9211_04811 (165 aa).

This sequence belongs to the YajQ family.

Functionally, nucleotide-binding protein. The sequence is that of Nucleotide-binding protein P9211_04811 from Prochlorococcus marinus (strain MIT 9211).